Here is a 940-residue protein sequence, read N- to C-terminus: Protein translocase subunit SecA 1 (940 aa).

ATP is bound by residues Gln83, 101-105, and Asp490; that span reads GEGKT. The disordered stretch occupies residues 856–940; it reads AEQGGTATAA…AKPPKSVKRR (85 aa).

Belongs to the SecA family. As to quaternary structure, monomer and homodimer. Part of the essential Sec protein translocation apparatus which comprises SecA, SecYEG and auxiliary proteins SecDF. Other proteins may also be involved.

It is found in the cell membrane. The protein localises to the cytoplasm. The catalysed reaction is ATP + H2O + cellular proteinSide 1 = ADP + phosphate + cellular proteinSide 2.. Functionally, part of the Sec protein translocase complex. Interacts with the SecYEG preprotein conducting channel. Has a central role in coupling the hydrolysis of ATP to the transfer of proteins into and across the cell membrane, serving as an ATP-driven molecular motor driving the stepwise translocation of polypeptide chains across the membrane. The polypeptide is Protein translocase subunit SecA 1 (Mycolicibacterium paratuberculosis (strain ATCC BAA-968 / K-10) (Mycobacterium paratuberculosis)).